We begin with the raw amino-acid sequence, 324 residues long: Polycomb complex protein BMI-1 (324 aa).

An RING-type zinc finger spans residues 18 to 57 (CVLCGGYFIDATTIIECLHSFCKTCIVRYLETSKYCPICD). Residues 81-95 (KLVPGLFKNEMKRRR) carry the Nuclear localization signal motif. The segment at 160–180 (RYLRCPAAMTVMHLRKFLRSK) is interaction with PHC2. Positions 162–226 (LRCPAAMTVM…GPLPLKYRVR (65 aa)) are interaction with E4F1. The segment at 232 to 324 (MKMSHQRDGL…LNGSSATSSG (93 aa)) is disordered. A compositionally biased stretch (low complexity) spans 264 to 276 (PSTSSCLPSPSTP). Residues 277 to 307 (VQSPHPQFPHISSTMNGTSNSPSANHQSSFA) show a composition bias toward polar residues. Residues 313 to 324 (SSLNGSSATSSG) show a composition bias toward low complexity.

Component of a PRC1-like complex. Identified in a PRC1-like HPRC-H complex with CBX2, CBX4, CBX8, PHC1, PHC2, PHC3, RING1 and RNF2. Interacts with RNF2/RING2. Interacts with RING1. Part of a complex that contains RNF2, UB2D3 and BMI1, where RNF2 and BMI1 form a tight heterodimer, and UB2D3 interacts only with RNF2. The complex composed of RNF2, UB2D3 and BMI1 binds nucleosomes, and has activity only with nucleosomal histone H2A. Interacts with CBX7 and CBX8. Interacts with SPOP. Part of a complex consisting of BMI1, CUL3 and SPOP. Interacts with E4F1. Interacts with PHC2. Interacts with zinc finger protein ZNF277. May be part of a complex including at least ZNF277, BMI1 and RNF2/RING2. Post-translationally, may be polyubiquitinated; which does not lead to proteasomal degradation. Monoubiquitinated. In terms of tissue distribution, detected in most organs with high expression levels in thymus, heart, brain and testis.

Its subcellular location is the nucleus. It localises to the cytoplasm. Its function is as follows. Component of a Polycomb group (PcG) multiprotein PRC1-like complex, a complex class required to maintain the transcriptionally repressive state of many genes, including Hox genes, throughout development. PcG PRC1 complex acts via chromatin remodeling and modification of histones; it mediates monoubiquitination of histone H2A 'Lys-119', rendering chromatin heritably changed in its expressibility. The complex composed of RNF2, UB2D3 and BMI1 binds nucleosomes, and has activity only with nucleosomal histone H2A. In the PRC1-like complex, regulates the E3 ubiquitin-protein ligase activity of RNF2/RING2. This Mus musculus (Mouse) protein is Polycomb complex protein BMI-1 (Bmi1).